A 200-amino-acid chain; its full sequence is Holliday junction branch migration complex subunit RuvA (200 aa).

Residues 1–64 (MYAYFRGRVV…EDALQLYGFS (64 aa)) form a domain I region. Residues 65 to 143 (SEEEKQLFRL…KLSPPGAAAT (79 aa)) form a domain II region. The tract at residues 144-154 (PAGAVQCGIRE) is flexible linker. The tract at residues 154 to 200 (EDATNALLTLGFSRTAAQQAVAGVLEANPGGSVEDVVKSALLAMHNR) is domain III.

This sequence belongs to the RuvA family. Homotetramer. Forms an RuvA(8)-RuvB(12)-Holliday junction (HJ) complex. HJ DNA is sandwiched between 2 RuvA tetramers; dsDNA enters through RuvA and exits via RuvB. An RuvB hexamer assembles on each DNA strand where it exits the tetramer. Each RuvB hexamer is contacted by two RuvA subunits (via domain III) on 2 adjacent RuvB subunits; this complex drives branch migration. In the full resolvosome a probable DNA-RuvA(4)-RuvB(12)-RuvC(2) complex forms which resolves the HJ.

It is found in the cytoplasm. Functionally, the RuvA-RuvB-RuvC complex processes Holliday junction (HJ) DNA during genetic recombination and DNA repair, while the RuvA-RuvB complex plays an important role in the rescue of blocked DNA replication forks via replication fork reversal (RFR). RuvA specifically binds to HJ cruciform DNA, conferring on it an open structure. The RuvB hexamer acts as an ATP-dependent pump, pulling dsDNA into and through the RuvAB complex. HJ branch migration allows RuvC to scan DNA until it finds its consensus sequence, where it cleaves and resolves the cruciform DNA. This Chlorobium luteolum (strain DSM 273 / BCRC 81028 / 2530) (Pelodictyon luteolum) protein is Holliday junction branch migration complex subunit RuvA.